The chain runs to 247 residues: Putative ankyrin repeat protein RBE_1110 (247 aa).

ANK repeat units lie at residues 105–135 (QNKD…CIDY) and 139–171 (EGHN…KLIT).

In Rickettsia bellii (strain RML369-C), this protein is Putative ankyrin repeat protein RBE_1110.